A 252-amino-acid polypeptide reads, in one-letter code: 3-dehydroquinate dehydratase (252 aa).

Residues 46–48 (EWR) and Arg82 contribute to the 3-dehydroquinate site. His143 acts as the Proton donor/acceptor in catalysis. Residue Lys170 is the Schiff-base intermediate with substrate of the active site. Residues Arg212, Ser231, and Gln235 each coordinate 3-dehydroquinate.

It belongs to the type-I 3-dehydroquinase family. In terms of assembly, homodimer.

It catalyses the reaction 3-dehydroquinate = 3-dehydroshikimate + H2O. It functions in the pathway metabolic intermediate biosynthesis; chorismate biosynthesis; chorismate from D-erythrose 4-phosphate and phosphoenolpyruvate: step 3/7. In terms of biological role, involved in the third step of the chorismate pathway, which leads to the biosynthesis of aromatic amino acids. Catalyzes the cis-dehydration of 3-dehydroquinate (DHQ) and introduces the first double bond of the aromatic ring to yield 3-dehydroshikimate. In Listeria welshimeri serovar 6b (strain ATCC 35897 / DSM 20650 / CCUG 15529 / CIP 8149 / NCTC 11857 / SLCC 5334 / V8), this protein is 3-dehydroquinate dehydratase.